We begin with the raw amino-acid sequence, 210 residues long: Putative 3-methyladenine DNA glycosylase (210 aa).

Residues 180–210 are disordered; it reads SRPPPGAAAARAARAPAAPAPRPRRPRGSGP. Low complexity predominate over residues 186 to 196; that stretch reads AAAARAARAPA. Positions 201–210 are enriched in basic residues; that stretch reads RPRRPRGSGP.

It belongs to the DNA glycosylase MPG family.

The sequence is that of Putative 3-methyladenine DNA glycosylase from Anaeromyxobacter dehalogenans (strain 2CP-1 / ATCC BAA-258).